A 230-amino-acid polypeptide reads, in one-letter code: Ion-translocating oxidoreductase complex subunit E (230 aa).

Residues 1–17 are Cytoplasmic-facing; that stretch reads MSENRTLMLNGMWNNNP. The next 2 helical transmembrane spans lie at 18 to 38 and 39 to 59; these read ALVQ…VTNA and LGLG…VSLV. Residues 60 to 68 are Cytoplasmic-facing; that stretch reads RDYVPKEVR. A helical membrane pass occupies residues 69–89; that stretch reads IPVFVMIIASLVTCVQLLMNA. Over 90–92 the chain is Periplasmic; it reads YAY. A helical transmembrane segment spans residues 93–113; sequence GLYLSLGIFIPLIVTNCIIIG. Residues 114-123 lie on the Cytoplasmic side of the membrane; that stretch reads RAEAFASKND. Residues 124–144 form a helical membrane-spanning segment; sequence VLPAALDGFWMGLGMTSVLVV. Topologically, residues 145–181 are periplasmic; it reads LGSLREIIGNGTLFDGADLLLGEWAKVLRIEVFHFDS. The chain crosses the membrane as a helical span at residues 182 to 202; the sequence is AFLLALLPPGAFIGVGFLIAA. At 203-230 the chain is on the cytoplasmic side; that stretch reads KSVIDKQIAARQPKQQKQAIERARVTNV.

This sequence belongs to the NqrDE/RnfAE family. The complex is composed of six subunits: RnfA, RnfB, RnfC, RnfD, RnfE and RnfG.

The protein resides in the cell inner membrane. Its function is as follows. Part of a membrane-bound complex that couples electron transfer with translocation of ions across the membrane. This chain is Ion-translocating oxidoreductase complex subunit E, found in Vibrio cholerae serotype O1 (strain ATCC 39541 / Classical Ogawa 395 / O395).